Consider the following 135-residue polypeptide: Small ribosomal subunit protein uS11 (135 aa).

The protein belongs to the universal ribosomal protein uS11 family. In terms of assembly, part of the 30S ribosomal subunit. Interacts with proteins S7 and S18. Binds to IF-3.

Its function is as follows. Located on the platform of the 30S subunit, it bridges several disparate RNA helices of the 16S rRNA. Forms part of the Shine-Dalgarno cleft in the 70S ribosome. This Solibacter usitatus (strain Ellin6076) protein is Small ribosomal subunit protein uS11.